The sequence spans 231 residues: MRINEHSIQSLPKEERPRERLIRHGADSLSLIEILAIILGSGSKVASVLEVSRALVTRFGGLEALMQATLTELLEVQGIGFAKAIQLKAALNLGFRATRQQIKSRYLIEHSSHAYQLVKDELENENREIFMAIFQDTKGYLITYEVISIGSLSQTLVHPREVFYSAIRHKAASLIVVHNHPSGDPMPSNQDLKLTQILLEGSRLLGIPLRDHLIIGKNSYVSFKDQNLLLK.

In terms of domain architecture, MPN spans 107–229 (LIEHSSHAYQ…YVSFKDQNLL (123 aa)). The Zn(2+) site is built by H178, H180, and D191. A JAMM motif motif is present at residues 178–191 (HNHPSGDPMPSNQD).

It belongs to the UPF0758 family.

This chain is UPF0758 protein pc1765, found in Protochlamydia amoebophila (strain UWE25).